Here is a 465-residue protein sequence, read N- to C-terminus: Deoxyguanosinetriphosphate triphosphohydrolase-like protein (465 aa).

Positions 1 to 22 (MKWDKLLNDKRRRESGVTRSKN) are disordered. Residues 63–252 (RLTHSMEVST…LEVADDIAYL (190 aa)) form the HD domain.

It belongs to the dGTPase family. Type 3 subfamily.

This chain is Deoxyguanosinetriphosphate triphosphohydrolase-like protein, found in Listeria innocua serovar 6a (strain ATCC BAA-680 / CLIP 11262).